The chain runs to 500 residues: Cytochrome P450 71B22 (500 aa).

A helical transmembrane segment spans residues 1-21; sequence MSISLYFLLLLPLFLIFFKKL. Cysteine 441 serves as a coordination point for heme.

It belongs to the cytochrome P450 family. Requires heme as cofactor.

Its subcellular location is the membrane. The sequence is that of Cytochrome P450 71B22 (CYP71B22) from Arabidopsis thaliana (Mouse-ear cress).